The sequence spans 841 residues: Translation initiation factor IF-2 (841 aa).

Basic and acidic residues-rich tracts occupy residues Met1 to Lys12, Ala52 to Lys92, Glu114 to Ala170, Arg188 to Arg202, and Lys213 to Gly235. Disordered stretches follow at residues Met1–Val24 and Ala52–Leu246. A tr-type G domain is found at Thr340–Thr510. The segment at Gly349–Thr356 is G1. A GTP-binding site is contributed by Gly349–Thr356. The G2 stretch occupies residues Gly374 to His378. The segment at Asp396 to Gly399 is G3. Residues Asp396–His400 and Asn450–Asp453 contribute to the GTP site. The G4 stretch occupies residues Asn450–Asp453. Positions Ser486–Lys488 are G5.

This sequence belongs to the TRAFAC class translation factor GTPase superfamily. Classic translation factor GTPase family. IF-2 subfamily.

The protein resides in the cytoplasm. One of the essential components for the initiation of protein synthesis. Protects formylmethionyl-tRNA from spontaneous hydrolysis and promotes its binding to the 30S ribosomal subunits. Also involved in the hydrolysis of GTP during the formation of the 70S ribosomal complex. This is Translation initiation factor IF-2 from Actinobacillus pleuropneumoniae serotype 5b (strain L20).